The following is a 245-amino-acid chain: Collagen triple helix repeat-containing protein 1 (245 aa).

An N-terminal signal peptide occupies residues 1-32 (MHPQGRAAPPQLLLGLFLVLLLLLQLSAPISA). The region spanning 59–92 (QGPAGVPGRDGSPGANGIPGTPGIPGRDGFKGEK) is the Collagen-like domain. Residues 64–87 (VPGRDGSPGANGIPGTPGIPGRDG) form a disordered region. N-linked (GlcNAc...) asparagine glycosylation occurs at Asn188.

N-glycosylated.

It localises to the secreted. The protein localises to the extracellular space. It is found in the extracellular matrix. Functionally, may act as a negative regulator of collagen matrix deposition. This Mus musculus (Mouse) protein is Collagen triple helix repeat-containing protein 1 (Cthrc1).